Consider the following 426-residue polypeptide: Transcriptional enhancer factor TEF-1 (426 aa).

Met-1 carries the N-acetylmethionine modification. A compositionally biased stretch (polar residues) spans Met-1 to Pro-12. Positions Met-1–Ala-31 are disordered. Position 11 is a phosphoserine (Ser-11). Basic and acidic residues predominate over residues Asn-15–Asp-28. A DNA-binding region (TEA) is located at residues Asp-28–Asp-104. An N6-lactoyllysine modification is found at Lys-108. The segment at Gly-167–Asp-426 is transcriptional activation.

As to quaternary structure, interacts with YAP1 and WWTR1/TAZ. Post-translationally, lactylation by AARS1 promotes nuclear localization and stabilization of YAP1, leading to increased Hippo signaling pathway. Delactylated by SIRT1. As to expression, preferentially expressed in skeletal muscle. Lower levels in pancreas, placenta, and heart.

The protein resides in the nucleus. In terms of biological role, transcription factor which plays a key role in the Hippo signaling pathway, a pathway involved in organ size control and tumor suppression by restricting proliferation and promoting apoptosis. The core of this pathway is composed of a kinase cascade wherein MST1/MST2, in complex with its regulatory protein SAV1, phosphorylates and activates LATS1/2 in complex with its regulatory protein MOB1, which in turn phosphorylates and inactivates YAP1 oncoprotein and WWTR1/TAZ. Acts by mediating gene expression of YAP1 and WWTR1/TAZ, thereby regulating cell proliferation, migration and epithelial mesenchymal transition (EMT) induction. Binds specifically and cooperatively to the SPH and GT-IIC 'enhansons' (5'-GTGGAATGT-3') and activates transcription in vivo in a cell-specific manner. The activation function appears to be mediated by a limiting cell-specific transcriptional intermediary factor (TIF). Involved in cardiac development. Binds to the M-CAT motif. The polypeptide is Transcriptional enhancer factor TEF-1 (TEAD1) (Homo sapiens (Human)).